We begin with the raw amino-acid sequence, 331 residues long: Cathepsin S (331 aa).

The N-terminal stretch at M1–A16 is a signal peptide. Positions H17–K114 are cleaved as a propeptide — activation peptide. The N-linked (GlcNAc...) asparagine glycan is linked to N104. 4 disulfide bridges follow: C126–C224, C136–C180, C170–C213, and C272–C320. The active site involves C139. Active-site residues include H278 and N298.

It belongs to the peptidase C1 family. Monomer.

Its subcellular location is the lysosome. It is found in the secreted. It localises to the cytoplasmic vesicle. The protein resides in the phagosome. The catalysed reaction is Similar to cathepsin L, but with much less activity on Z-Phe-Arg-|-NHMec, and more activity on the Z-Val-Val-Arg-|-Xaa compound.. In terms of biological role, thiol protease. Key protease responsible for the removal of the invariant chain from MHC class II molecules and MHC class II antigen presentation. The bond-specificity of this proteinase is in part similar to the specificities of cathepsin L. This Bos taurus (Bovine) protein is Cathepsin S (CTSS).